A 712-amino-acid chain; its full sequence is Cyclolysin secretion/processing ATP-binding protein CyaB (712 aa).

The region spanning 7-128 is the Peptidase C39 domain; that stretch reads QCASVPDSGL…ALWAGELLLC (122 aa). The region spanning 157-439 is the ABC transmembrane type-1 domain; sequence IGEVLLISLV…LAQLWNDFQQ (283 aa). 6 helical membrane passes run 160–180, 194–214, 272–292, 298–318, 367–387, and 390–410; these read VLLI…FFQV, LNVI…LTGI, AVTV…MFFY, LVVL…TPVL, VAAG…VTLI, and LVAL…RMTV. Residues 471–706 form the ABC transporter domain; sequence IELDRVSFRY…GGLYARLQAL (236 aa). An ATP-binding site is contributed by 505–512; sequence GRSGSGKS.

This sequence belongs to the ABC transporter superfamily. Cyclolysin exporter (TC 3.A.1.109.2) family.

The protein resides in the cell membrane. Involved in the export of calmodulin-sensitive adenylate cyclase-hemolysin (cyclolysin). This is Cyclolysin secretion/processing ATP-binding protein CyaB (cyaB) from Bordetella pertussis (strain ATCC 9797 / DSM 5571 / CCUG 30873 / LMG 14455 / NCTC 10739 / 18323).